The sequence spans 158 residues: MSQEKKYVITYKGVKKLEEELEYLKTTKRKEITEKIKVALSFGDLSENSEYDEAKNDQAFVEGRIAQIENMLKNANVIDESELKNDVVSVGSKVMVKDYQFDEEIEFSIVGSAEADPIENKISNESPVGSALIGKKVGDEIEVNVPDGVDKYKILAIK.

The stretch at Val14–Asn76 forms a coiled coil.

Belongs to the GreA/GreB family.

Necessary for efficient RNA polymerase transcription elongation past template-encoded arresting sites. The arresting sites in DNA have the property of trapping a certain fraction of elongating RNA polymerases that pass through, resulting in locked ternary complexes. Cleavage of the nascent transcript by cleavage factors such as GreA or GreB allows the resumption of elongation from the new 3'terminus. GreA releases sequences of 2 to 3 nucleotides. The chain is Transcription elongation factor GreA from Clostridium acetobutylicum (strain ATCC 824 / DSM 792 / JCM 1419 / IAM 19013 / LMG 5710 / NBRC 13948 / NRRL B-527 / VKM B-1787 / 2291 / W).